Consider the following 176-residue polypeptide: Ferritin, liver middle subunit (176 aa).

The region spanning 7–156 is the Ferritin-like diiron domain; it reads QNYHRDCEAA…DFITNLSRMD (150 aa). Residues Glu24, Glu59, His62, Glu104, and Gln138 each contribute to the Fe cation site.

Belongs to the ferritin family. In terms of assembly, in liver, forms a heteromer consisting of middle and heavy subunits. The functional molecule forms a roughly spherical shell with a diameter of 12 nm and contains a central cavity into which the insoluble mineral iron core is deposited. As to expression, liver (at protein level).

The catalysed reaction is 4 Fe(2+) + O2 + 4 H(+) = 4 Fe(3+) + 2 H2O. Its function is as follows. Stores iron in a soluble, non-toxic, readily available form. Important for iron homeostasis. Has ferroxidase activity. Iron is taken up in the ferrous form and deposited as ferric hydroxides after oxidation. This is Ferritin, liver middle subunit from Trematomus bernacchii (Emerald rockcod).